A 524-amino-acid polypeptide reads, in one-letter code: Ribose import ATP-binding protein RbsA (524 aa).

ABC transporter domains are found at residues 17-252 (LQLD…GRSI) and 263-505 (IGQP…VSQV). ATP is bound at residue 49 to 56 (GENGAGKS).

This sequence belongs to the ABC transporter superfamily. Ribose importer (TC 3.A.1.2.1) family. The complex is composed of an ATP-binding protein (RbsA), two transmembrane proteins (RbsC) and a solute-binding protein (RbsB).

The protein resides in the cell membrane. The catalysed reaction is D-ribose(out) + ATP + H2O = D-ribose(in) + ADP + phosphate + H(+). In terms of biological role, part of the ABC transporter complex RbsABC involved in ribose import. Responsible for energy coupling to the transport system. The chain is Ribose import ATP-binding protein RbsA from Corynebacterium glutamicum (strain ATCC 13032 / DSM 20300 / JCM 1318 / BCRC 11384 / CCUG 27702 / LMG 3730 / NBRC 12168 / NCIMB 10025 / NRRL B-2784 / 534).